We begin with the raw amino-acid sequence, 251 residues long: Acidic leucine-rich nuclear phosphoprotein 32 family member B (251 aa).

LRR repeat units follow at residues 16–40 (PAAV…LTAE), 43–64 (NLEF…PKLP), and 65–84 (KLKK…DMLA). Lysine 86 bears the N6-acetyllysine mark. An LRR 4 repeat occupies 89–110 (NLTHLNLSGNKLKDISTLEPLK). The LRRCT domain maps to 123–161 (CEVTNLNDYRESVFKLLPQLTYLDGYDREDQEAPDSDAE). Over residues 149 to 233 (DREDQEAPDS…DEDEDEEEEE (85 aa)) the composition is skewed to acidic residues. Residues 149–251 (DREDQEAPDS…RETDDEGEDD (103 aa)) form a disordered region. A Phosphoserine modification is found at serine 158. Residues 234–244 (GGKGEKRKRET) show a composition bias toward basic and acidic residues. The Nuclear localization signal signature appears at 239–242 (KRKR). Threonine 244 carries the phosphothreonine modification.

Belongs to the ANP32 family. Interacts with histones H3 and H4. Interacts with KLF5; this interaction induces promoter region-specific histone incorporation and inhibition of histone acetylation by ANP32B. As to quaternary structure, (Microbial infection) Interacts with Sendai virus protein M. In terms of assembly, (Microbial infection) Interacts with Measles virus protein M. (Microbial infection) Interacts with Hendra virus protein M; this interaction promotes nuclear localization of M. As to quaternary structure, (Microbial infection) Interacts with influenza virus B protein PB2; this interaction strongly supports influenza B virus replication. Post-translationally, some glutamate residues are glycylated by TTLL8. This modification occurs exclusively on glutamate residues and results in a glycine chain on the gamma-carboxyl group. In terms of processing, directly cleaved by caspase-3/CASP3. As to expression, expressed in heart, lung, pancreas, prostate and in spleen, thymus and placenta.

The protein localises to the nucleus. Its subcellular location is the cytoplasm. Multifunctional protein that is involved in the regulation of many processes including cell proliferation, apoptosis, cell cycle progression or transcription. Regulates the proliferation of neuronal stem cells, differentiation of leukemic cells and progression from G1 to S phase of the cell cycle. As negative regulator of caspase-3-dependent apoptosis, may act as an antagonist of ANP32A in regulating tissue homeostasis. Exhibits histone chaperone properties, able to recruit histones to certain promoters, thus regulating the transcription of specific genes. Also plays an essential role in the nucleocytoplasmic transport of specific mRNAs via the uncommon nuclear mRNA export receptor XPO1/CRM1. Participates in the regulation of adequate adaptive immune responses by acting on mRNA expression and cell proliferation. Functionally, (Microbial infection) Plays an essential role in influenza A and B viral genome replication. Also plays a role in foamy virus mRNA export from the nucleus to the cytoplasm. The chain is Acidic leucine-rich nuclear phosphoprotein 32 family member B (ANP32B) from Homo sapiens (Human).